Consider the following 366-residue polypeptide: Aminomethyltransferase (366 aa).

Belongs to the GcvT family. The glycine cleavage system is composed of four proteins: P, T, L and H.

The enzyme catalyses N(6)-[(R)-S(8)-aminomethyldihydrolipoyl]-L-lysyl-[protein] + (6S)-5,6,7,8-tetrahydrofolate = N(6)-[(R)-dihydrolipoyl]-L-lysyl-[protein] + (6R)-5,10-methylene-5,6,7,8-tetrahydrofolate + NH4(+). Functionally, the glycine cleavage system catalyzes the degradation of glycine. The polypeptide is Aminomethyltransferase (Bacillus cereus (strain B4264)).